The following is a 597-amino-acid chain: MLSSSHLKPSAPSATLLRFLRSQSDFLSVNSSRCARPSRSKPYVHQILPCNASSRASSTWTCTASAPHRTTLQTSLVRTPTPAARSHSSSRPRLWLCAGQAGRSSSIFPLSNAPYSRSASTKSRPLLRRLLDLRRSNSSADKHNRGGPALIDDGTEGGFTIGRGLAAKATNEPRLRCTEFDKNGNVTLVNGEFKKSELIAKYGLLPRDLRKIDSSTLPHILVRPSAILINLLHLRVLIKHDRVLVFDAYGSTDSYMQSLFVYDLEGKLQQKQTGGFGALPYEFRALEAVLISVTTGLEEEFNGVREPVVRVLRALEEDIDRDKLRHLLIYSKKLGTFEQKARLVRDAIDDLLEADDDLAAMYLTERANGVQREEDDHQEVEMLLESYHKVCDEIVQASGNLVTSIRNTEEVVKAILDANRNSLMLLDLKFSIGTLGLATGTLFSALYGMNLKNFIEESDLGFGAVSMTCFMITAVVCVYGLAKLRKLQRVRMWGEAGVGGAPLTPLTTRSGILSGHRSNWRADSIEPVWGSLPGEARTERIKRLRETAAAAAARSASADATAQRASALRSSANANGGAPKGSEHSPTRETEASGSSA.

The transit peptide at 1–56 directs the protein to the mitochondrion; the sequence is MLSSSHLKPSAPSATLLRFLRSQSDFLSVNSSRCARPSRSKPYVHQILPCNASSRA. A helical membrane pass occupies residues 423 to 443; it reads LMLLDLKFSIGTLGLATGTLF. The short motif at 447–450 is the YGMN element; that stretch reads YGMN. A helical transmembrane segment spans residues 462–482; the sequence is FGAVSMTCFMITAVVCVYGLA. The span at 552–577 shows a compositional bias: low complexity; that stretch reads AARSASADATAQRASALRSSANANGG. Residues 552 to 597 are disordered; the sequence is AARSASADATAQRASALRSSANANGGAPKGSEHSPTRETEASGSSA. The span at 581 to 591 shows a compositional bias: basic and acidic residues; sequence GSEHSPTRETE.

Belongs to the CorA metal ion transporter (MIT) (TC 1.A.35) family. In terms of assembly, homopentamer. Forms homooligomers. Interacts with MFM1.

Its subcellular location is the mitochondrion inner membrane. Its function is as follows. High-conductance magnesium-selective channel that mediates the influx of magnesium into the mitochondrial matrix. Essential for the splicing of mRNA group II introns in mitochondria by affecting mitochondrial magnesium concentrations, which are critical for group II intron splicing. It also suppresses a variety of mitochondrial intron mutations and its absence may disturb the assembly of mitochondrial membrane complexes. The sequence is that of Mitochondrial inner membrane magnesium transporter mrs2 (mrs2) from Aspergillus fumigatus (strain ATCC MYA-4609 / CBS 101355 / FGSC A1100 / Af293) (Neosartorya fumigata).